Consider the following 177-residue polypeptide: Large ribosomal subunit protein uL10 (177 aa).

This sequence belongs to the universal ribosomal protein uL10 family. Part of the ribosomal stalk of the 50S ribosomal subunit. The N-terminus interacts with L11 and the large rRNA to form the base of the stalk. The C-terminus forms an elongated spine to which L12 dimers bind in a sequential fashion forming a multimeric L10(L12)X complex.

Functionally, forms part of the ribosomal stalk, playing a central role in the interaction of the ribosome with GTP-bound translation factors. This is Large ribosomal subunit protein uL10 from Thermoanaerobacter pseudethanolicus (strain ATCC 33223 / 39E) (Clostridium thermohydrosulfuricum).